Consider the following 408-residue polypeptide: Probable medium-chain specific acyl-CoA dehydrogenase 2, mitochondrial (408 aa).

The N-terminal 5 residues, 1–5 (MLSRL), are a transit peptide targeting the mitochondrion. FAD contacts are provided by residues 143 to 152 (YCVTEPGAGS) and 176 to 178 (WIT). A substrate-binding site is contributed by Ser152. Residue 263-266 (DMTR) coordinates substrate. Residues 291-293 (RKA), 301-302 (HQ), and 355-359 (MLFRC) contribute to the FAD site. Residue Glu382 is the Proton acceptor of the active site. Gly383 provides a ligand contact to substrate. Position 384 to 386 (384 to 386 (TSQ)) interacts with FAD. Arg394 provides a ligand contact to substrate.

Belongs to the acyl-CoA dehydrogenase family. Homotetramer. FAD is required as a cofactor.

Its subcellular location is the mitochondrion matrix. It catalyses the reaction a medium-chain 2,3-saturated fatty acyl-CoA + oxidized [electron-transfer flavoprotein] + H(+) = a medium-chain (2E)-enoyl-CoA + reduced [electron-transfer flavoprotein]. Its pathway is lipid metabolism; mitochondrial fatty acid beta-oxidation. Functionally, this enzyme is specific for acyl chain lengths of 4 to 16. The chain is Probable medium-chain specific acyl-CoA dehydrogenase 2, mitochondrial from Caenorhabditis briggsae.